A 137-amino-acid chain; its full sequence is TSC22 domain family protein 3 (137 aa).

An AP1-binding region spans residues 1–60 (MNTEMYQTPMEVAVYQLHNFSISFFSSLLGGDVVSVKLDNSASGASVVALDNKIEQAMDL). 2 positions are modified to phosphoserine: asparagine 40 and valine 73. Positions 76–97 (LKEQIRELLEKNSQLERENTLL) are leucine-zipper. The disordered stretch occupies residues 101 to 137 (ASPEQLEKFQSRLSPEEPAPEAPETPETPEAPGGSAV). The residue at position 102 (serine 102) is a Phosphoserine. Phosphothreonine occurs at positions 125 and 128. Over residues 128–137 (TPEAPGGSAV) the composition is skewed to low complexity.

It belongs to the TSC-22/Dip/Bun family. As to quaternary structure, can form homodimers, however it is likely to function as a monomer. Interacts with NFKB1. Interacts (via N-terminus) with JUN and FOS; these interactions inhibit the binding of active AP1 to its target DNA. Interacts with MYOD1. Interacts with HDAC1; this interaction affects HDAC1 activity on MYOG promoter and thus inhibits MYOD1 transcriptional activity. In terms of assembly, interacts with MYOD1. As to expression, expressed in T-cells. Expression inversely correlates with T-cell activation, being higher in resting cells and lower in cells activated by TCR/CD3 triggering (at protein level). Constitutively expressed in lung, intestine, kidney and liver, most probably by resident cells from the macrophage lineage. Expressed in thymus, lymph nodes, bone marrow, spleen, lung and skeletal muscle. In terms of tissue distribution, expressed in spleen and skeletal muscle (at protein level). Expressed in the cortex, medulla and papilla of the kidney. Expressed in the cortex, medulla and papilla of the kidney. As to expression, expressed in spleen and skeletal muscle (at protein level).

The protein resides in the cytoplasm. Its subcellular location is the nucleus. In terms of biological role, protects T-cells from IL2 deprivation-induced apoptosis through the inhibition of FOXO3A transcriptional activity that leads to the down-regulation of the pro-apoptotic factor BCL2L11. In macrophages, plays a role in the anti-inflammatory and immunosuppressive effects of glucocorticoids and IL10. In T-cells, inhibits anti-CD3-induced NFKB1 nuclear translocation and thereby NFKB1 DNA-binding activities. In vitro, suppresses AP-1 transcription factor complex DNA-binding activities. Functionally, inhibits myogenic differentiation and mediates anti-myogenic effects of glucocorticoids by binding and regulating MYOD1 and HDAC1 transcriptional activity resulting in reduced expression of MYOG. This Mus musculus (Mouse) protein is TSC22 domain family protein 3.